The following is a 264-amino-acid chain: Thiazole synthase (264 aa).

The active-site Schiff-base intermediate with DXP is lysine 100. 1-deoxy-D-xylulose 5-phosphate-binding positions include glycine 161, 187-188 (AG), and 209-210 (NT).

Belongs to the ThiG family. As to quaternary structure, homotetramer. Forms heterodimers with either ThiH or ThiS.

It localises to the cytoplasm. The enzyme catalyses [ThiS sulfur-carrier protein]-C-terminal-Gly-aminoethanethioate + 2-iminoacetate + 1-deoxy-D-xylulose 5-phosphate = [ThiS sulfur-carrier protein]-C-terminal Gly-Gly + 2-[(2R,5Z)-2-carboxy-4-methylthiazol-5(2H)-ylidene]ethyl phosphate + 2 H2O + H(+). It participates in cofactor biosynthesis; thiamine diphosphate biosynthesis. In terms of biological role, catalyzes the rearrangement of 1-deoxy-D-xylulose 5-phosphate (DXP) to produce the thiazole phosphate moiety of thiamine. Sulfur is provided by the thiocarboxylate moiety of the carrier protein ThiS. In vitro, sulfur can be provided by H(2)S. The protein is Thiazole synthase of Nitrosospira multiformis (strain ATCC 25196 / NCIMB 11849 / C 71).